Reading from the N-terminus, the 703-residue chain is Pinin (703 aa).

N-acetylalanine is present on alanine 2. A coiled-coil region spans residues 2–32 (AVAVRTLQEQLEKAKESLKNVDENIRKLTGR). A disordered region spans residues 46–148 (ALSGPGGGRG…ETPERPGPIF (103 aa)). Serine 48 carries the phosphoserine modification. Arginine 54 carries the omega-N-methylarginine modification. Phosphoserine occurs at positions 58, 66, 96, and 100. Positions 87–100 (GGERRTRRESRQES) are enriched in basic and acidic residues. A Glycyl lysine isopeptide (Lys-Gly) (interchain with G-Cter in SUMO2) cross-link involves residue lysine 109. A phosphoserine mark is found at serine 114 and serine 115. A Glycyl lysine isopeptide (Lys-Gly) (interchain with G-Cter in SUMO2) cross-link involves residue lysine 121. Residue threonine 125 is modified to Phosphothreonine. Glycyl lysine isopeptide (Lys-Gly) (interchain with G-Cter in SUMO2) cross-links involve residues lysine 138 and lysine 157. A Glycyl lysine isopeptide (Lys-Gly) (interchain with G-Cter in SUMO1); alternate cross-link involves residue lysine 159. A Glycyl lysine isopeptide (Lys-Gly) (interchain with G-Cter in SUMO2); alternate cross-link involves residue lysine 159. A coiled-coil region spans residues 165–236 (ATERQKRRQE…HNAKIIKYIR (72 aa)). The interval 223–285 (EWNEHNAKII…AEQINKMEAR (63 aa)) is sufficient for PSAP complex assembly. Residue lysine 230 forms a Glycyl lysine isopeptide (Lys-Gly) (interchain with G-Cter in SUMO2) linkage. N6-acetyllysine; alternate is present on lysine 240. An N6-succinyllysine; alternate modification is found at lysine 240. Residues lysine 281, lysine 306, and lysine 313 each participate in a glycyl lysine isopeptide (Lys-Gly) (interchain with G-Cter in SUMO2) cross-link. Disordered stretches follow at residues 284–314 (ARPR…EGKV), 331–394 (RVGT…EEVM), and 408–703 (AEQE…PGQL). Composition is skewed to basic and acidic residues over residues 348–357 (EIPIVHSDAE) and 366–386 (KQEM…EKQQ). Serine 354 carries the phosphoserine modification. Residues 354–411 (SDAEKEQEEEEQKQEMEVKMEEETEVRESEKQQDSQPEEVMDVLEMVESVKNVIAEQE) adopt a coiled-coil conformation. Residues lysine 366 and lysine 372 each participate in a glycyl lysine isopeptide (Lys-Gly) (interchain with G-Cter in SUMO2) cross-link. A phosphoserine mark is found at serine 382 and serine 388. The span at 417 to 433 (QVERVEPSENEASKELE) shows a compositional bias: basic and acidic residues. Residues serine 450 and serine 457 each carry the phosphoserine modification. Low complexity predominate over residues 479-489 (PMAQPQAQSLP). Residues lysine 541 and lysine 549 each participate in a glycyl lysine isopeptide (Lys-Gly) (interchain with G-Cter in SUMO2) cross-link. At serine 565 the chain carries Phosphoserine. Residue lysine 566 forms a Glycyl lysine isopeptide (Lys-Gly) (interchain with G-Cter in SUMO2) linkage. Residues 572–588 (RSRSRGRARNRTSKSRS) show a composition bias toward basic residues. Residues 589–642 (RSSSSSSSSSSSTSSSSGSSSSSGSSSSRTSSSSSSTSGSSSRDSSSSTTSSSE) show a composition bias toward low complexity. Residues 646–664 (RSRGRGHNRDRKHRRSVDR) show a composition bias toward basic residues. Basic and acidic residues predominate over residues 665–676 (KRRDASGLERSH). A phosphoserine mark is found at serine 670 and serine 691.

The protein belongs to the pinin family. In terms of assembly, found in a mRNA splicing-dependent exon junction complex (EJC). Found in a complex with SR proteins. Found in a mRNP complex with RNPS1. Component of the PSAP complex consisting of RNPS1, SAP18 and PNN. Interacts with PNISR, CTBP1, CTBP2, KRT8, KRT18, KRT19, PS1D/PNO40, PPIG, RNPS1, SFRS4 and SRRM2. Identified in the spliceosome C complex.

Its subcellular location is the nucleus speckle. The protein resides in the cell junction. The protein localises to the desmosome. Its function is as follows. Transcriptional activator binding to the E-box 1 core sequence of the E-cadherin promoter gene; the core-binding sequence is 5'CAGGTG-3'. Capable of reversing CTBP1-mediated transcription repression. Auxiliary component of the splicing-dependent multiprotein exon junction complex (EJC) deposited at splice junction on mRNAs. The EJC is a dynamic structure consisting of core proteins and several peripheral nuclear and cytoplasmic associated factors that join the complex only transiently either during EJC assembly or during subsequent mRNA metabolism. Participates in the regulation of alternative pre-mRNA splicing. Associates to spliced mRNA within 60 nt upstream of the 5'-splice sites. Component of the PSAP complex which binds RNA in a sequence-independent manner and is proposed to be recruited to the EJC prior to or during the splicing process and to regulate specific excision of introns in specific transcription subsets. Involved in the establishment and maintenance of epithelia cell-cell adhesion. The chain is Pinin (PNN) from Bos taurus (Bovine).